The sequence spans 350 residues: ATP-dependent (S)-NAD(P)H-hydrate dehydratase (350 aa).

The YjeF C-terminal domain maps to 35–342 (LMQSVKRIIP…PEVGRAYEEL (308 aa)). Residues glycine 139 and 192–198 (NVAEFGR) each bind (6S)-NADPHX. ATP-binding positions include 230-234 (KGPVD) and 249-258 (GGLKRCGGQG). Residue aspartate 259 coordinates (6S)-NADPHX.

The protein belongs to the NnrD/CARKD family. Mg(2+) serves as cofactor.

The protein localises to the cytoplasm. It carries out the reaction (6S)-NADHX + ATP = ADP + phosphate + NADH + H(+). It catalyses the reaction (6S)-NADPHX + ATP = ADP + phosphate + NADPH + H(+). Functionally, catalyzes the dehydration of the S-form of NAD(P)HX at the expense of ATP, which is converted to ADP. Together with NAD(P)HX epimerase, which catalyzes the epimerization of the S- and R-forms, the enzyme allows the repair of both epimers of NAD(P)HX, a damaged form of NAD(P)H that is a result of enzymatic or heat-dependent hydration. In Mycosarcoma maydis (Corn smut fungus), this protein is ATP-dependent (S)-NAD(P)H-hydrate dehydratase.